The following is a 160-amino-acid chain: uncharacterized protein (160 aa).

A helical membrane pass occupies residues leucine 8 to alanine 28.

The protein resides in the membrane. This is an uncharacterized protein from Escherichia coli (strain K12).